A 254-amino-acid chain; its full sequence is Proteasome subunit alpha (254 aa).

The disordered stretch occupies residues 232 to 254; that stretch reads PEVDSSESSNEAEAGAEKGSGES.

It belongs to the peptidase T1A family. As to quaternary structure, the 20S proteasome core is composed of 14 alpha and 14 beta subunits that assemble into four stacked heptameric rings, resulting in a barrel-shaped structure. The two inner rings, each composed of seven catalytic beta subunits, are sandwiched by two outer rings, each composed of seven alpha subunits. The catalytic chamber with the active sites is on the inside of the barrel. Has a gated structure, the ends of the cylinder being occluded by the N-termini of the alpha-subunits. Is capped by the proteasome-associated ATPase, ARC.

The protein resides in the cytoplasm. Its pathway is protein degradation; proteasomal Pup-dependent pathway. Its activity is regulated as follows. The formation of the proteasomal ATPase ARC-20S proteasome complex, likely via the docking of the C-termini of ARC into the intersubunit pockets in the alpha-rings, may trigger opening of the gate for substrate entry. Interconversion between the open-gate and close-gate conformations leads to a dynamic regulation of the 20S proteasome proteolysis activity. Functionally, component of the proteasome core, a large protease complex with broad specificity involved in protein degradation. This is Proteasome subunit alpha from Mycolicibacterium vanbaalenii (strain DSM 7251 / JCM 13017 / BCRC 16820 / KCTC 9966 / NRRL B-24157 / PYR-1) (Mycobacterium vanbaalenii).